A 59-amino-acid chain; its full sequence is Large ribosomal subunit protein bL32 (59 aa).

The interval 1–22 (MAVQQNKKSPSKRGMHRSHDFL) is disordered.

Belongs to the bacterial ribosomal protein bL32 family.

The sequence is that of Large ribosomal subunit protein bL32 from Thiobacillus denitrificans (strain ATCC 25259 / T1).